We begin with the raw amino-acid sequence, 359 residues long: Peptide chain release factor 1 (359 aa).

Glutamine 235 bears the N5-methylglutamine mark.

It belongs to the prokaryotic/mitochondrial release factor family. In terms of processing, methylated by PrmC. Methylation increases the termination efficiency of RF1.

It localises to the cytoplasm. Peptide chain release factor 1 directs the termination of translation in response to the peptide chain termination codons UAG and UAA. The protein is Peptide chain release factor 1 of Methylibium petroleiphilum (strain ATCC BAA-1232 / LMG 22953 / PM1).